The primary structure comprises 365 residues: MMLSLCAIAGLLLAPSIQAERIRDLTTVLGVRENALIGYGLVVGLDGTGDQTTQTPFTTQSLRNMLSQLGVAVPTGTNMQLKNVAAVMVTAKLPAFARAGQKIDVVVSSLGSAKSLRGGTLLMTPLKGVDNQVYALAQGNILVSGSGAQAGGNRVQVNQLNGGRISGGAIVERSVPADFAGGNVIMLQLNNDDFSLAQQISDAINRHFGHRSALPLDSRTINVAVPPDGPGKVRFLASLQNIPITLGPTDAVVVINSRTGSVVMNRDVVLGSCAVAHGELTVEVNRTYKVSQPDTPFGGGRTVVVPETAINVRNEGGALQQIDAGANLNDVVSALNGIGATPNDLMAILQSMQSTGCLNAKLEIN.

Positions M1 to A19 are cleaved as a signal peptide.

The protein belongs to the FlgI family. As to quaternary structure, the basal body constitutes a major portion of the flagellar organelle and consists of four rings (L,P,S, and M) mounted on a central rod.

The protein localises to the periplasm. The protein resides in the bacterial flagellum basal body. In terms of biological role, assembles around the rod to form the L-ring and probably protects the motor/basal body from shearing forces during rotation. This is Flagellar P-ring protein from Sodalis glossinidius (strain morsitans).